The sequence spans 268 residues: Mediator of RNA polymerase II transcription subunit 8 (268 aa).

A coiled-coil region spans residues 1 to 29 (MQREEKQLEASLDALLNQVADLKNSLGSF). Ser-82 is modified (phosphoserine). A coiled-coil region spans residues 133 to 163 (ADAAQKQIQSLNKMCSNLLEKISKEERESES). Positions 142 to 151 (SLNKMCSNLL) are interaction with the Elongin BC complex. Disordered regions lie at residues 156-176 (KEER…FNPG) and 193-268 (NWRP…PYQR). Positions 200 to 209 (SGPGQPGQPG) are enriched in gly residues.

The protein belongs to the Mediator complex subunit 8 family. Component of the Mediator complex, which is composed of MED1, MED4, MED6, MED7, MED8, MED9, MED10, MED11, MED12, MED13, MED13L, MED14, MED15, MED16, MED17, MED18, MED19, MED20, MED21, MED22, MED23, MED24, MED25, MED26, MED27, MED29, MED30, MED31, CCNC, CDK8 and CDC2L6/CDK11. The MED12, MED13, CCNC and CDK8 subunits form a distinct module termed the CDK8 module. Mediator containing the CDK8 module is less active than Mediator lacking this module in supporting transcriptional activation. Individual preparations of the Mediator complex lacking one or more distinct subunits have been variously termed ARC, CRSP, DRIP, PC2, SMCC and TRAP. May be part of a multisubunit E3 ubiquitin-protein ligase complex with the Elongin BC complex (ELOB and ELOC), CUL2 and RBX1.

It localises to the nucleus. It functions in the pathway protein modification; protein ubiquitination. Its function is as follows. Component of the Mediator complex, a coactivator involved in the regulated transcription of nearly all RNA polymerase II-dependent genes. Mediator functions as a bridge to convey information from gene-specific regulatory proteins to the basal RNA polymerase II transcription machinery. Mediator is recruited to promoters by direct interactions with regulatory proteins and serves as a scaffold for the assembly of a functional preinitiation complex with RNA polymerase II and the general transcription factors. May play a role as a target recruitment subunit in E3 ubiquitin-protein ligase complexes and thus in ubiquitination and subsequent proteasomal degradation of target proteins. In Mus musculus (Mouse), this protein is Mediator of RNA polymerase II transcription subunit 8 (Med8).